We begin with the raw amino-acid sequence, 384 residues long: Cytochrome b (384 aa).

4 helical membrane-spanning segments follow: residues 32–52, 76–98, 113–133, and 179–199; these read FGFLAFICLAVQIITGIFLAI, WLLRYAHANGASIFFIIIYIHIS, TWVVGVFILLLIMATAFMGYV, and FFSFHYLFPFIIVAIAFVHMA. 2 residues coordinate heme b: H82 and H96. The heme b site is built by H183 and H197. H202 is a binding site for a ubiquinone. Helical transmembrane passes span 225–245, 289–309, 321–341, and 348–368; these read FIIKDAFGLVLFLLFFSLFVY, LGGVIAIIISILILAFLPWIT, LYKKLFWILFSIVLILGWIGG, and YVVIGQLITFLYFVYFLIFIP.

This sequence belongs to the cytochrome b family. As to quaternary structure, the main subunits of complex b-c1 are: cytochrome b, cytochrome c1 and the Rieske protein. It depends on heme b as a cofactor.

The protein resides in the mitochondrion inner membrane. Its function is as follows. Component of the ubiquinol-cytochrome c reductase complex (complex III or cytochrome b-c1 complex) that is part of the mitochondrial respiratory chain. The b-c1 complex mediates electron transfer from ubiquinol to cytochrome c. Contributes to the generation of a proton gradient across the mitochondrial membrane that is then used for ATP synthesis. This chain is Cytochrome b (MT-CYB), found in Cyanidium caldarium (Red alga).